Here is a 324-residue protein sequence, read N- to C-terminus: Phospho-N-acetylmuramoyl-pentapeptide-transferase (324 aa).

10 helical membrane-spanning segments follow: residues 5 to 25 (AIVI…PLFI), 57 to 77 (IMIL…IAGL), 81 to 101 (TYLL…DDMI), 117 to 137 (FIGQ…SGFS), 147 to 167 (WSVD…VGGS), 176 to 196 (LDGL…VLAW), 203 to 223 (VAVF…FNAH), 227 to 247 (VFMG…VAVL), 250 to 270 (LELL…SVII), and 302 to 322 (IVVT…YIEV).

Belongs to the glycosyltransferase 4 family. MraY subfamily. Mg(2+) is required as a cofactor.

The protein resides in the cell membrane. The enzyme catalyses UDP-N-acetyl-alpha-D-muramoyl-L-alanyl-gamma-D-glutamyl-meso-2,6-diaminopimeloyl-D-alanyl-D-alanine + di-trans,octa-cis-undecaprenyl phosphate = di-trans,octa-cis-undecaprenyl diphospho-N-acetyl-alpha-D-muramoyl-L-alanyl-D-glutamyl-meso-2,6-diaminopimeloyl-D-alanyl-D-alanine + UMP. Its pathway is cell wall biogenesis; peptidoglycan biosynthesis. Functionally, catalyzes the initial step of the lipid cycle reactions in the biosynthesis of the cell wall peptidoglycan: transfers peptidoglycan precursor phospho-MurNAc-pentapeptide from UDP-MurNAc-pentapeptide onto the lipid carrier undecaprenyl phosphate, yielding undecaprenyl-pyrophosphoryl-MurNAc-pentapeptide, known as lipid I. In Geobacillus kaustophilus (strain HTA426), this protein is Phospho-N-acetylmuramoyl-pentapeptide-transferase.